The sequence spans 63 residues: Metallothionein-2 (63 aa).

The tract at residues 1–30 (MDPQDCTCAAGDSCSCAGSCKCKNCRCQSC) is beta. Residues C6, C8, C14, C16, C20, C22, C25, C27, C30, C34, C35, C37, C38, C42, C45, C49, C51, C59, C61, and C62 each contribute to the a divalent metal cation site. The segment at 31 to 63 (RKSCCSCCPASCSNCAKGCVCKEPSSSKCSCCH) is alpha.

The protein belongs to the metallothionein superfamily. Type 1 family.

In terms of biological role, metallothioneins have a high content of cysteine residues that bind various heavy metals. This Columba livia (Rock dove) protein is Metallothionein-2.